Reading from the N-terminus, the 108-residue chain is Iron-sulfur cluster assembly protein CyaY (108 aa).

Belongs to the frataxin family.

Involved in iron-sulfur (Fe-S) cluster assembly. May act as a regulator of Fe-S biogenesis. This chain is Iron-sulfur cluster assembly protein CyaY, found in Pseudoalteromonas atlantica (strain T6c / ATCC BAA-1087).